The primary structure comprises 158 residues: Transcription elongation factor GreA (158 aa).

Residues 8-74 (TKGGYNKLKD…TLERVLSTAT (67 aa)) adopt a coiled-coil conformation.

It belongs to the GreA/GreB family.

Its function is as follows. Necessary for efficient RNA polymerase transcription elongation past template-encoded arresting sites. The arresting sites in DNA have the property of trapping a certain fraction of elongating RNA polymerases that pass through, resulting in locked ternary complexes. Cleavage of the nascent transcript by cleavage factors such as GreA or GreB allows the resumption of elongation from the new 3'terminus. GreA releases sequences of 2 to 3 nucleotides. This Chloroherpeton thalassium (strain ATCC 35110 / GB-78) protein is Transcription elongation factor GreA.